Consider the following 126-residue polypeptide: Large ribosomal subunit protein bL17 (126 aa).

This sequence belongs to the bacterial ribosomal protein bL17 family. Part of the 50S ribosomal subunit. Contacts protein L32.

The chain is Large ribosomal subunit protein bL17 from Rickettsia felis (strain ATCC VR-1525 / URRWXCal2) (Rickettsia azadi).